A 659-amino-acid chain; its full sequence is tRNA uridine 5-carboxymethylaminomethyl modification enzyme MnmG (659 aa).

Position 13–18 (13–18 (GGGHAG)) interacts with FAD. 281–295 (GPRYCPSVEDKINRF) lines the NAD(+) pocket.

It belongs to the MnmG family. As to quaternary structure, homodimer. Heterotetramer of two MnmE and two MnmG subunits. Requires FAD as cofactor.

It is found in the cytoplasm. Functionally, NAD-binding protein involved in the addition of a carboxymethylaminomethyl (cmnm) group at the wobble position (U34) of certain tRNAs, forming tRNA-cmnm(5)s(2)U34. In Delftia acidovorans (strain DSM 14801 / SPH-1), this protein is tRNA uridine 5-carboxymethylaminomethyl modification enzyme MnmG.